A 346-amino-acid chain; its full sequence is Inositol 2-dehydrogenase (346 aa).

Belongs to the Gfo/Idh/MocA family. Homotetramer.

It carries out the reaction myo-inositol + NAD(+) = scyllo-inosose + NADH + H(+). Involved in the oxidation of myo-inositol (MI) to 2-keto-myo-inositol (2KMI or 2-inosose). The polypeptide is Inositol 2-dehydrogenase (Rhodococcus erythropolis (strain PR4 / NBRC 100887)).